Consider the following 468-residue polypeptide: Aspartate ammonia-lyase (468 aa).

The L-aspartate site is built by T99, S138, T139, N140, and T185. Residues 315–324 (GSSIMPGKVN) form an SS loop region. S316 serves as the catalytic Proton acceptor. The L-aspartate site is built by S317 and K322.

It belongs to the class-II fumarase/aspartase family. Aspartase subfamily. Homotetramer.

It catalyses the reaction L-aspartate = fumarate + NH4(+). Functionally, catalyzes the reversible conversion of L-aspartate to fumarate and ammonia. This chain is Aspartate ammonia-lyase (aspA), found in Helicobacter pylori (strain J99 / ATCC 700824) (Campylobacter pylori J99).